A 440-amino-acid chain; its full sequence is Thymidine phosphorylase (440 aa).

This sequence belongs to the thymidine/pyrimidine-nucleoside phosphorylase family. Homodimer.

It carries out the reaction thymidine + phosphate = 2-deoxy-alpha-D-ribose 1-phosphate + thymine. Its pathway is pyrimidine metabolism; dTMP biosynthesis via salvage pathway; dTMP from thymine: step 1/2. In terms of biological role, the enzymes which catalyze the reversible phosphorolysis of pyrimidine nucleosides are involved in the degradation of these compounds and in their utilization as carbon and energy sources, or in the rescue of pyrimidine bases for nucleotide synthesis. The polypeptide is Thymidine phosphorylase (Shigella boydii serotype 4 (strain Sb227)).